The primary structure comprises 156 residues: Small ribosomal subunit protein uS7 (156 aa).

This sequence belongs to the universal ribosomal protein uS7 family. Part of the 30S ribosomal subunit. Contacts proteins S9 and S11.

Its function is as follows. One of the primary rRNA binding proteins, it binds directly to 16S rRNA where it nucleates assembly of the head domain of the 30S subunit. Is located at the subunit interface close to the decoding center, probably blocks exit of the E-site tRNA. The sequence is that of Small ribosomal subunit protein uS7 from Erythrobacter litoralis (strain HTCC2594).